Reading from the N-terminus, the 99-residue chain is Beta-2-microglobulin (99 aa).

In terms of domain architecture, Ig-like C1-type spans 5–93 (PRVQVYSRHP…HITLSEPKIV (89 aa)). Cys-25 and Cys-80 form a disulfide bridge.

Belongs to the beta-2-microglobulin family. In terms of assembly, heterodimer of an alpha chain and a beta chain. Beta-2-microglobulin is the beta-chain of major histocompatibility complex class I molecules.

Its subcellular location is the secreted. Functionally, component of the class I major histocompatibility complex (MHC). Involved in the presentation of peptide antigens to the immune system. In Cavia porcellus (Guinea pig), this protein is Beta-2-microglobulin (B2M).